We begin with the raw amino-acid sequence, 81 residues long: Small ribosomal subunit protein bS16 (81 aa).

Belongs to the bacterial ribosomal protein bS16 family.

The protein is Small ribosomal subunit protein bS16 of Phytoplasma mali (strain AT).